Here is a 1045-residue protein sequence, read N- to C-terminus: Tyrosine-protein kinase-like otk (1045 aa).

An N-terminal signal peptide occupies residues 1–25 (MPIVMDMNMLLMLSLAFTVMAPASA). 5 consecutive Ig-like C2-type domains span residues 26–116 (SSSR…AKLS), 115–200 (LSVI…RVMS), 260–373 (PEGL…APVN), 376–469 (PGAL…VAIN), and 474–564 (PRFS…VRLL). Residues 26–587 (SSSRFTQPPQ…AGDGFLVTRA (562 aa)) are Extracellular-facing. Intrachain disulfides connect C49–C97, C139–C189, C285–C362, and C406–C453. N344, N424, N435, N442, N450, N463, N518, and N530 each carry an N-linked (GlcNAc...) asparagine glycan. C496 and C548 form a disulfide bridge. A helical membrane pass occupies residues 588-608 (VLITMTVALAYIVLVVGLMLW). Topologically, residues 609–1045 (CRYRRQARKA…LSKAMQAAEK (437 aa)) are cytoplasmic. Positions 628 to 676 (AGGDQAESGKNTEQEPCLSKQRNGHGKSRTAANGDAQKSDDTACSQQSK) are disordered. S681 carries the phosphoserine modification. One can recognise a Protein kinase; inactive domain in the interval 695–1040 (LSELIQIGRG…QLGAALSKAM (346 aa)). The interval 722-790 (ASPSDKDADT…QPQEQAQSES (69 aa)) is disordered. Residues 725–736 (SDKDADTEKQHS) show a composition bias toward basic and acidic residues. Residues 743-752 (GASGASGCGS) show a composition bias toward gly residues. Positions 771 to 782 (DDIEEIKEEEQP) are enriched in acidic residues.

This sequence belongs to the protein kinase superfamily. Tyr protein kinase family. Insulin receptor subfamily. Interacts with plexA; component of a receptor complex that mediates the repulsive signaling in response to Semaphorin ligands.

It localises to the cell membrane. In terms of biological role, acts as a calcium-dependent, homophilic cell adhesion molecule that regulates neural recognition during the development of the nervous system. Component of the repulsive Plexin signaling response to regulate motor axon guidance at the embryonic stage. Also component of a receptor complex that is required in the adult visual system to innervate the lamina layer; specific targeting of R1-R6 axons. The sequence is that of Tyrosine-protein kinase-like otk from Drosophila mojavensis (Fruit fly).